The chain runs to 707 residues: MSVVGVDFGALNTVIAVARNRGVDVITNEVSNRATPSLVGFGPKSRYIGEPAKTQEISNLKNTVGCLKRLAGRTLDDPDVAIEQQFISATLVDVNGEVGAEVTYLGEKRKFSATELIAMFMSKIKQTTQAEVKVAVQELVLSVPAWFTDKQRRSILDAAEIAGLRPLRLINDTTAAALGWGITKLDLPGPEEKPRRVAFVDVGYSNYTCSIVEFKKGELSVKSTACDRHFGGRNFDKALLDHLHKEFLGKYKIDIFTNPKAVCRVLAAAEKLKKILSANQQAPLNIESLMNDIDVRAMITRQEFEAMVEPLLAKVHVPLEQALADAKLTKDDIDIIEVVGGGSRVPSVKERIQAFFGKQLSFTMNQDEAIARGCAFSCAILSPVFKVRDFQVQDIINYPIEFTWEKDADIPDEDTSLVVFNKGNVLPSTKILTFYRKQPFDLEARYTNPEELPGKTSPFIGRFSIKGVHATEGPEDFMICKLKARINIHGILNVESAYYVEDQEVEEEVKDENGDVVMEGDKPKTRKVKKQVRKGELPVVSATPSLDPAAKNAAIEREQAMIMEDKLVADTEEKKNELETYIYDLRNKLDDQYADLASEEEKEKIRAKLMEVEDWLYDEGDDATKAVYVAKIEEIRALAGPVVQRYFDKVEAERQALQEKLEAEKAAKKAEEEARKAKEAAEKAAQEGAKDDEMTDADAPKPVVEEA.

The span at 662-692 (EAEKAAKKAEEEARKAKEAAEKAAQEGAKDD) shows a compositional bias: basic and acidic residues. The tract at residues 662–707 (EAEKAAKKAEEEARKAKEAAEKAAQEGAKDDEMTDADAPKPVVEEA) is disordered.

The protein belongs to the heat shock protein 70 family. In terms of assembly, binds hsp30 independent of temperature or substrate. The N-terminus is blocked.

It localises to the cytoplasm. The chain is Heat shock protein hsp88 (hsp88) from Neurospora crassa (strain ATCC 24698 / 74-OR23-1A / CBS 708.71 / DSM 1257 / FGSC 987).